Here is a 274-residue protein sequence, read N- to C-terminus: Copper chaperone for superoxide dismutase (274 aa).

One can recognise an HMA domain in the interval Ala-11 to Val-74. 2 residues coordinate Cu cation: Cys-22 and Cys-25. Residue Lys-76 forms a Glycyl lysine isopeptide (Lys-Gly) (interchain with G-Cter in ubiquitin) linkage. Positions Ala-88 to Ala-234 are superoxide dismutase-like. Cys-141 and Cys-227 are joined by a disulfide. His-147, His-155, His-164, and Asp-167 together coordinate Zn(2+). Residues Lys-189, Lys-216, and Lys-241 each participate in a glycyl lysine isopeptide (Lys-Gly) (interchain with G-Cter in ubiquitin) cross-link. Residues Cys-244 and Cys-246 each contribute to the Cu cation site.

It in the C-terminal section; belongs to the Cu-Zn superoxide dismutase family. In terms of assembly, homodimer, and heterodimer with SOD1. Interacts with COMMD1. Interacts with XIAP/BIRC4. Interacts with SLC31A1(via C-terminal domain); this interaction is Cu(1+)-mediated. The heterodimer CCS:SOD1 interacts with SLC31A1; this heterotrimer is Cu(1+)-mediated and its maintenance is regulated through SOD1 activation. Requires Cu(2+) as cofactor. The cofactor is Zn(2+). In terms of processing, ubiquitinion by XIAP/BIRC4 leads to enhancement of its chaperone activity toward its physiologic target, SOD1, rather than proteasomal degradation. XIAP/BIRC4 preferentially ubiquitinates at Lys-241.

It localises to the cytoplasm. Delivers copper to copper zinc superoxide dismutase (SOD1). The sequence is that of Copper chaperone for superoxide dismutase from Sus scrofa (Pig).